We begin with the raw amino-acid sequence, 149 residues long: Probable microsomal glutathione S-transferase (149 aa).

The next 2 helical transmembrane spans lie at 7–27 (SIFP…IGLW) and 123–143 (LSHI…GSSL).

It belongs to the MAPEG family.

Its subcellular location is the membrane. It catalyses the reaction RX + glutathione = an S-substituted glutathione + a halide anion + H(+). Functionally, may perform the conjugation of reduced glutathione to electrophiles. This chain is Probable microsomal glutathione S-transferase (mgst), found in Dictyostelium discoideum (Social amoeba).